The chain runs to 379 residues: Chaperone protein DnaJ (379 aa).

Positions 5-70 (DYYEVLGVSR…QKRAAYDQYG (66 aa)) constitute a J domain. The CR-type zinc-finger motif lies at 134–212 (GVTKEIRIPT…CHGHGRVEKS (79 aa)). Residues Cys147, Cys150, Cys164, Cys167, Cys186, Cys189, Cys200, and Cys203 each contribute to the Zn(2+) site. CXXCXGXG motif repeat units lie at residues 147–154 (CDVCHGSG), 164–171 (CPTCHGAG), 186–193 (CPHCHGRG), and 200–207 (CNKCHGHG).

The protein belongs to the DnaJ family. In terms of assembly, homodimer. Requires Zn(2+) as cofactor.

Its subcellular location is the cytoplasm. Participates actively in the response to hyperosmotic and heat shock by preventing the aggregation of stress-denatured proteins and by disaggregating proteins, also in an autonomous, DnaK-independent fashion. Unfolded proteins bind initially to DnaJ; upon interaction with the DnaJ-bound protein, DnaK hydrolyzes its bound ATP, resulting in the formation of a stable complex. GrpE releases ADP from DnaK; ATP binding to DnaK triggers the release of the substrate protein, thus completing the reaction cycle. Several rounds of ATP-dependent interactions between DnaJ, DnaK and GrpE are required for fully efficient folding. Also involved, together with DnaK and GrpE, in the DNA replication of plasmids through activation of initiation proteins. The chain is Chaperone protein DnaJ from Yersinia pestis bv. Antiqua (strain Antiqua).